The chain runs to 302 residues: MSEVSLQAVKDYLLDLQDRICDALGAEDGAATFREDSWEREQGGGGRSRVLENGAVIEKGGVNFSHVFGEQLPPSATEARPELAGRSFQAMGVSLVIHPKNPYVPTSHANVRFFVAEKEGEAPVWWFGGGFDLTPYYGFEEDVVHWHQTAKVACQPFGKEIYPEFKTWCDDYFYLKHRNEPRGVGGLFFDDLNRFDFDTSFALMRSIGDAYVPAYQPILARRKDHEFGDRERQFQLYRRGRYVEFNLVYDRGTIFGLQSGGRTESILMSLPPLVRWDYDYHPEPNSAESELYHKFLIHREWV.

S94 contributes to the substrate binding site. H98 and H108 together coordinate a divalent metal cation. H108 serves as the catalytic Proton donor. Substrate is bound at residue 110–112 (NVR). Residues H147 and H177 each contribute to the a divalent metal cation site. The important for dimerization stretch occupies residues 242–277 (YVEFNLVYDRGTIFGLQSGGRTESILMSLPPLVRWD). 260-262 (GGR) is a binding site for substrate.

It belongs to the aerobic coproporphyrinogen-III oxidase family. In terms of assembly, homodimer. A divalent metal cation is required as a cofactor.

The protein localises to the cytoplasm. The catalysed reaction is coproporphyrinogen III + O2 + 2 H(+) = protoporphyrinogen IX + 2 CO2 + 2 H2O. It participates in porphyrin-containing compound metabolism; protoporphyrin-IX biosynthesis; protoporphyrinogen-IX from coproporphyrinogen-III (O2 route): step 1/1. Functionally, involved in the heme biosynthesis. Catalyzes the aerobic oxidative decarboxylation of propionate groups of rings A and B of coproporphyrinogen-III to yield the vinyl groups in protoporphyrinogen-IX. The protein is Oxygen-dependent coproporphyrinogen-III oxidase of Alcanivorax borkumensis (strain ATCC 700651 / DSM 11573 / NCIMB 13689 / SK2).